A 318-amino-acid polypeptide reads, in one-letter code: Protein OPG137 (318 aa).

Positions 145-172 (VYDKDKRIQMLEDEVVNLRNQRSNTKSS) form a coiled coil.

It belongs to the orthopoxvirus OPG137 family. In terms of assembly, homomultimer. Interacts with OPG160. Phosphorylated by a OPG054-independent mechanism.

The protein resides in the host cytoplasm. Required for viral crescent formation early during virus morphogenesis. This Vaccinia virus (strain Ankara) (VACV) protein is Protein OPG137 (OPG137).